We begin with the raw amino-acid sequence, 203 residues long: GTP cyclohydrolase-2 (203 aa).

GTP is bound at residue 49–53 (RIHSE). Cysteine 54, cysteine 65, and cysteine 67 together coordinate Zn(2+). GTP-binding positions include glutamine 70, 92 to 94 (EGR), and threonine 114. Aspartate 126 functions as the Proton acceptor in the catalytic mechanism. Arginine 128 (nucleophile) is an active-site residue. Positions 149 and 154 each coordinate GTP.

The protein belongs to the GTP cyclohydrolase II family. The cofactor is Zn(2+).

The enzyme catalyses GTP + 4 H2O = 2,5-diamino-6-hydroxy-4-(5-phosphoribosylamino)-pyrimidine + formate + 2 phosphate + 3 H(+). It participates in cofactor biosynthesis; riboflavin biosynthesis; 5-amino-6-(D-ribitylamino)uracil from GTP: step 1/4. Its function is as follows. Catalyzes the conversion of GTP to 2,5-diamino-6-ribosylamino-4(3H)-pyrimidinone 5'-phosphate (DARP), formate and pyrophosphate. The polypeptide is GTP cyclohydrolase-2 (Shewanella sp. (strain MR-7)).